Consider the following 286-residue polypeptide: Formamidopyrimidine-DNA glycosylase (286 aa).

Residue proline 2 is the Schiff-base intermediate with DNA of the active site. Glutamate 3 serves as the catalytic Proton donor. Catalysis depends on lysine 61, which acts as the Proton donor; for beta-elimination activity. Residues histidine 96, arginine 115, and lysine 161 each contribute to the DNA site. Residues 247–281 (EAYGREGEPCRRCGRAMRREAFMNRSSYFCPSCQR) form an FPG-type zinc finger. Arginine 271 functions as the Proton donor; for delta-elimination activity in the catalytic mechanism.

The protein belongs to the FPG family. In terms of assembly, monomer. It depends on Zn(2+) as a cofactor.

The enzyme catalyses Hydrolysis of DNA containing ring-opened 7-methylguanine residues, releasing 2,6-diamino-4-hydroxy-5-(N-methyl)formamidopyrimidine.. The catalysed reaction is 2'-deoxyribonucleotide-(2'-deoxyribose 5'-phosphate)-2'-deoxyribonucleotide-DNA = a 3'-end 2'-deoxyribonucleotide-(2,3-dehydro-2,3-deoxyribose 5'-phosphate)-DNA + a 5'-end 5'-phospho-2'-deoxyribonucleoside-DNA + H(+). Involved in base excision repair of DNA damaged by oxidation or by mutagenic agents. Acts as a DNA glycosylase that recognizes and removes damaged bases. Has a preference for oxidized purines, such as 7,8-dihydro-8-oxoguanine (8-oxoG). Has AP (apurinic/apyrimidinic) lyase activity and introduces nicks in the DNA strand. Cleaves the DNA backbone by beta-delta elimination to generate a single-strand break at the site of the removed base with both 3'- and 5'-phosphates. The sequence is that of Formamidopyrimidine-DNA glycosylase from Mycobacteroides abscessus (strain ATCC 19977 / DSM 44196 / CCUG 20993 / CIP 104536 / JCM 13569 / NCTC 13031 / TMC 1543 / L948) (Mycobacterium abscessus).